The chain runs to 1066 residues: Vinculin (1066 aa).

Residues 1 to 835 form an N-terminal globular head region; sequence MPVFHTRTIE…GAVAKVREAF (835 aa). Phosphoserine is present on serine 97. Residues 168–208 are talin-interaction; the sequence is MTKMAKMIDERQQELTHQEHRVMLVNSMNTVKELLPVLISA. N6-acetyllysine is present on lysine 173. 3 repeat units span residues 259–369, 370–479, and 480–589. The tract at residues 259–589 is 3 X 112 AA tandem repeats; it reads ASKDTEAMKR…LKDLKAQMQE (331 aa). Residues serine 260, serine 272, serine 275, serine 290, serine 346, and serine 434 each carry the phosphoserine modification. Lysine 496 is subject to N6-acetyllysine. Tyrosine 537 is subject to Phosphotyrosine. Serine 574, serine 579, and serine 600 each carry phosphoserine. Phosphothreonine is present on residues threonine 604 and threonine 672. Serine 721 carries the post-translational modification Phosphoserine. The interval 741 to 764 is interaction with ACTN4; that stretch reads MANIQPQMLVAGATSIARRANRIL. Residues serine 795 and serine 809 each carry the phosphoserine modification. Residue tyrosine 822 is modified to Phosphotyrosine. The linker (Pro-rich) stretch occupies residues 836-878; the sequence is QPQEPDFPPPPPDLEQLRLTDELAPPKPPLPEGEVPPPRPPPP. The tract at residues 857–887 is disordered; sequence ELAPPKPPLPEGEVPPPRPPPPEEKDEEFPE. Pro residues predominate over residues 860–876; that stretch reads PPKPPLPEGEVPPPRPP. Positions 879–1066 are C-terminal tail; the sequence is EEKDEEFPEQ…RWVRKTPWYQ (188 aa). 2 facilitates phospholipid membrane insertion regions span residues 935–978 and 1052–1066; these read RLVR…KRIR and AGFT…PWYQ. At tyrosine 1065 the chain carries Phosphotyrosine; by SRC-type Tyr-kinases.

It belongs to the vinculin/alpha-catenin family. As to quaternary structure, exhibits self-association properties. Part of a complex composed of THSD1, PTK2/FAK1, TLN1 and VCL. Interacts with APBB1IP, NRAP and TLN1. Interacts with SYNM. Interacts with CTNNB1 and this interaction is necessary for its localization to the cell-cell junctions and for its function in regulating cell surface expression of E-cadherin. Interacts with SORBS1. Interacts with SYNM. Interacts with CTNNA1. Binds to ACTN4; this interaction triggers conformational changes. Interacts with FLII. Post-translationally, phosphorylated; on serines, threonines and tyrosines. Phosphorylation on Tyr-1065 in activated platelets affects head-tail interactions and cell spreading but has no effect on actin binding nor on localization to focal adhesion plaques. In terms of processing, acetylated; mainly by myristic acid but also by a small amount of palmitic acid.

It localises to the cell membrane. It is found in the cell junction. Its subcellular location is the adherens junction. The protein localises to the focal adhesion. The protein resides in the cytoplasm. It localises to the cytoskeleton. It is found in the sarcolemma. Its subcellular location is the cell projection. The protein localises to the podosome. In terms of biological role, actin filament (F-actin)-binding protein involved in cell-matrix adhesion and cell-cell adhesion. Regulates cell-surface E-cadherin expression and potentiates mechanosensing by the E-cadherin complex. May also play important roles in cell morphology and locomotion. The polypeptide is Vinculin (Vcl) (Mus musculus (Mouse)).